A 430-amino-acid polypeptide reads, in one-letter code: Maltoporin (430 aa).

Residues 1–23 (MNNKKTLLAVAISGMMFATSAAA) form the signal peptide.

Belongs to the porin LamB (TC 1.B.3) family. Homotrimer formed of three 18-stranded antiparallel beta-barrels, containing three independent channels.

It is found in the cell outer membrane. It catalyses the reaction beta-maltose(in) = beta-maltose(out). Its function is as follows. Involved in the transport of maltose and maltodextrins. This is Maltoporin from Actinobacillus succinogenes (strain ATCC 55618 / DSM 22257 / CCUG 43843 / 130Z).